The chain runs to 358 residues: MQEWFQNLFAATLGLGDLGITVGLVVSVIVKIVIILIPLILTVAYLTYFERKVIGFMQLRVGPNVTGPRGLIQPFADVFKLLFKEVTRPKLSNKALFYIGPIMSLAPSFAAWAVIPFNEEWVLTNINIGLLYILMITSLSVYGVIIAGWASNSKYSFLGAMRASAQSISYEIAMSAALVCVVMVSGSMNFSDIVAAQAKGIAGGSVFSWNWLPLFPIFIVYLISAVAETNRAPFDVAEGESEIVAGHHVEYSGFAFALFFLAEYIFMILIAALTSLMFLGGWLSPFPQSWGIVGTPSAFWMFVKMAAVLYWYLWIRATFPRYRYDQIMRLGWKVLIPIGFAYIVVLGVWMISPLNLWK.

The next 8 membrane-spanning stretches (helical) occupy residues 20-40 (ITVG…IPLI), 95-115 (ALFY…WAVI), 128-148 (IGLL…IIAG), 168-188 (ISYE…SGSM), 206-226 (VFSW…ISAV), 253-273 (GFAF…IAAL), 295-315 (TPSA…YLWI), and 334-354 (VLIP…ISPL).

This sequence belongs to the complex I subunit 1 family. In terms of assembly, NDH-1 is composed of 14 different subunits. Subunits NuoA, H, J, K, L, M, N constitute the membrane sector of the complex.

It localises to the cell inner membrane. It carries out the reaction a quinone + NADH + 5 H(+)(in) = a quinol + NAD(+) + 4 H(+)(out). NDH-1 shuttles electrons from NADH, via FMN and iron-sulfur (Fe-S) centers, to quinones in the respiratory chain. The immediate electron acceptor for the enzyme in this species is believed to be ubiquinone. Couples the redox reaction to proton translocation (for every two electrons transferred, four hydrogen ions are translocated across the cytoplasmic membrane), and thus conserves the redox energy in a proton gradient. This subunit may bind ubiquinone. The protein is NADH-quinone oxidoreductase subunit H of Neisseria gonorrhoeae (strain ATCC 700825 / FA 1090).